Consider the following 154-residue polypeptide: Resuscitation-promoting factor RpfD (154 aa).

A helical transmembrane segment spans residues I21–G41.

Belongs to the transglycosylase family. Rpf subfamily.

It localises to the cell membrane. Functionally, factor that stimulates resuscitation of dormant cells. Has peptidoglycan (PG) hydrolytic activity. PG fragments could either directly activate the resuscitation pathway of dormant bacteria or serve as a substrate for endogenous Rpf, resulting in low molecular weight products with resuscitation activity. The sequence is that of Resuscitation-promoting factor RpfD (rpfD) from Mycobacterium tuberculosis (strain CDC 1551 / Oshkosh).